Consider the following 455-residue polypeptide: C4-dicarboxylate transport protein (455 aa).

8 helical membrane passes run 20-40, 59-79, 91-111, 160-180, 209-229, 231-251, 344-364, and 367-387; these read HLYF…HFYP, MIIA…MGTL, GYFL…ANVI, GNIL…ILIG, PIGA…ASVV, LATL…VVLG, LLLV…AGFI, and AATL…ILGV.

The protein belongs to the dicarboxylate/amino acid:cation symporter (DAACS) (TC 2.A.23) family.

The protein resides in the cell inner membrane. Functionally, responsible for the transport of dicarboxylates such as succinate, fumarate, and malate from the periplasm across the membrane. This Paracoccus denitrificans (strain Pd 1222) protein is C4-dicarboxylate transport protein.